Reading from the N-terminus, the 1879-residue chain is Protein TIC 214 (1879 aa).

Transmembrane regions (helical) follow at residues 18–38 (IINS…FSIG), 64–84 (FITG…HLAL), 87–107 (PYTI…WTNP), 124–144 (LSIQ…HFIL), 172–192 (VGWL…LVWI), and 218–238 (IAPI…GRIP). Disordered regions lie at residues 245–305 (ETSK…IDET) and 586–702 (ISTS…DEPM). Composition is skewed to acidic residues over residues 253-268 (AETE…EIET) and 295-305 (EKEDPDKIDET). The span at 586-688 (ISTSTPTSTP…SIPASTSTST (103 aa)) shows a compositional bias: low complexity. The segment covering 691-701 (IKSKDEPKDEP) has biased composition (basic and acidic residues).

The protein belongs to the TIC214 family. As to quaternary structure, part of the Tic complex.

Its subcellular location is the plastid. The protein localises to the chloroplast inner membrane. Involved in protein precursor import into chloroplasts. May be part of an intermediate translocation complex acting as a protein-conducting channel at the inner envelope. In Cucumis sativus (Cucumber), this protein is Protein TIC 214.